The chain runs to 227 residues: 2-C-methyl-D-erythritol 4-phosphate cytidylyltransferase (227 aa).

The protein belongs to the IspD/TarI cytidylyltransferase family. IspD subfamily.

The enzyme catalyses 2-C-methyl-D-erythritol 4-phosphate + CTP + H(+) = 4-CDP-2-C-methyl-D-erythritol + diphosphate. It functions in the pathway isoprenoid biosynthesis; isopentenyl diphosphate biosynthesis via DXP pathway; isopentenyl diphosphate from 1-deoxy-D-xylulose 5-phosphate: step 2/6. Functionally, catalyzes the formation of 4-diphosphocytidyl-2-C-methyl-D-erythritol from CTP and 2-C-methyl-D-erythritol 4-phosphate (MEP). The protein is 2-C-methyl-D-erythritol 4-phosphate cytidylyltransferase of Lachnospira eligens (strain ATCC 27750 / DSM 3376 / VPI C15-48 / C15-B4) (Eubacterium eligens).